We begin with the raw amino-acid sequence, 455 residues long: Putative PTS system EIIBC component YbbF (455 aa).

A PTS EIIB type-1 domain is found at 8–90; it reads HHLAQKILEL…SKLVSAEEGA (83 aa). Cys30 (phosphocysteine intermediate; for EIIB activity) is an active-site residue. The region spanning 116-455 is the PTS EIIC type-1 domain; sequence RKIASIFIPL…YKDEMASQFD (340 aa). 10 helical membrane passes run 118–138, 154–174, 181–201, 210–230, 250–270, 281–301, 325–345, 355–375, 399–419, and 423–443; these read IASI…ITGI, IAII…ILVG, FGGT…PEIA, LLPG…IAYT, VSLL…GGFI, ILDI…LPLV, LLPI…AVFV, AIAG…IFGV, YFQV…FLVL, and IILY…LTYA.

The protein resides in the cell membrane. The phosphoenolpyruvate-dependent sugar phosphotransferase system (sugar PTS), a major carbohydrate active -transport system, catalyzes the phosphorylation of incoming sugar substrates concomitantly with their translocation across the cell membrane. The polypeptide is Putative PTS system EIIBC component YbbF (ybbF) (Bacillus subtilis (strain 168)).